Consider the following 391-residue polypeptide: Protein Wnt-2b (391 aa).

5 disulfides stabilise this stretch: C107/C118, C158/C166, C168/C188, C237/C251, and C239/C246. Residue N117 is glycosylated (N-linked (GlcNAc...) asparagine). A lipid anchor (O-palmitoleoyl serine; by PORCN) is attached at S243. N283 carries an N-linked (GlcNAc...) asparagine glycan. Intrachain disulfides connect C309–C340, C325–C335, C339–C379, C355–C370, C357–C367, and C362–C363.

It belongs to the Wnt family. As to quaternary structure, forms a soluble 1:1 complex with AFM; this prevents oligomerization and is required for prolonged biological activity. The complex with AFM may represent the physiological form in body fluids. Interacts with FZD4 and FZD5. In terms of processing, palmitoleoylation is required for efficient binding to frizzled receptors. Depalmitoleoylation leads to Wnt signaling pathway inhibition. As to expression, isoform 1 is expressed in adult heart, brain, placenta, lung, prostate, testis, ovary, small intestine and colon. In the adult brain, it is mainly found in the caudate nucleus, subthalamic nucleus and thalamus. Also detected in fetal brain, lung and kidney. Isoform 2 is expressed in fetal brain, fetal lung, fetal kidney, caudate nucleus, testis and cancer cell lines.

It localises to the secreted. Its subcellular location is the extracellular space. The protein resides in the extracellular matrix. Functionally, ligand for members of the frizzled family of seven transmembrane receptors. Functions in the canonical Wnt/beta-catenin signaling pathway. Plays a redundant role in embryonic lung development. The polypeptide is Protein Wnt-2b (WNT2B) (Homo sapiens (Human)).